The following is a 73-amino-acid chain: Protein BP4C (73 aa).

Pollen specific.

This chain is Protein BP4C (BP4C), found in Brassica napus (Rape).